The primary structure comprises 92 residues: Small ribosomal subunit protein uS19c (92 aa).

This sequence belongs to the universal ribosomal protein uS19 family.

The protein localises to the plastid. Its subcellular location is the chloroplast. In terms of biological role, protein S19 forms a complex with S13 that binds strongly to the 16S ribosomal RNA. This Adiantum capillus-veneris (Maidenhair fern) protein is Small ribosomal subunit protein uS19c.